Here is a 307-residue protein sequence, read N- to C-terminus: UDP-N-acetylenolpyruvoylglucosamine reductase (307 aa).

The region spanning 33–198 (KVGGPADIFV…LNATFALQKG (166 aa)) is the FAD-binding PCMH-type domain. Arg-177 is a catalytic residue. Ser-227 (proton donor) is an active-site residue. Residue Glu-297 is part of the active site.

The protein belongs to the MurB family. Requires FAD as cofactor.

It is found in the cytoplasm. The catalysed reaction is UDP-N-acetyl-alpha-D-muramate + NADP(+) = UDP-N-acetyl-3-O-(1-carboxyvinyl)-alpha-D-glucosamine + NADPH + H(+). Its pathway is cell wall biogenesis; peptidoglycan biosynthesis. In terms of biological role, cell wall formation. This Clostridium novyi (strain NT) protein is UDP-N-acetylenolpyruvoylglucosamine reductase.